A 477-amino-acid chain; its full sequence is UDP-N-acetylmuramoylalanine--D-glutamate ligase (477 aa).

125 to 131 (GTNGKST) contacts ATP.

It belongs to the MurCDEF family.

The protein resides in the cytoplasm. The enzyme catalyses UDP-N-acetyl-alpha-D-muramoyl-L-alanine + D-glutamate + ATP = UDP-N-acetyl-alpha-D-muramoyl-L-alanyl-D-glutamate + ADP + phosphate + H(+). It functions in the pathway cell wall biogenesis; peptidoglycan biosynthesis. Functionally, cell wall formation. Catalyzes the addition of glutamate to the nucleotide precursor UDP-N-acetylmuramoyl-L-alanine (UMA). This is UDP-N-acetylmuramoylalanine--D-glutamate ligase from Rhodospirillum rubrum (strain ATCC 11170 / ATH 1.1.1 / DSM 467 / LMG 4362 / NCIMB 8255 / S1).